Consider the following 164-residue polypeptide: Diphosphoinositol polyphosphate phosphohydrolase 3-beta (164 aa).

Residues Arg9, 17–19 (KKR), and 38–40 (SSR) each bind substrate. The Nudix hydrolase domain maps to 17–144 (KKRAACLCFR…VHAEYLEKLK (128 aa)). 2 residues coordinate Mg(2+): Gly49 and Glu65. Positions 50–71 (GGMEPEEEPGGAAVREVYEEAG) match the Nudix box motif. The active-site Proton acceptor is Glu68. Mg(2+) is bound at residue Glu69. Substrate contacts are provided by residues 89-91 (RKH), Arg115, and Lys133. A disordered region spans residues 144-164 (KLGGSPTNGNSMAPSSPDSDP). Over residues 148-164 (SPTNGNSMAPSSPDSDP) the composition is skewed to polar residues.

It belongs to the Nudix hydrolase family. DIPP subfamily. Mg(2+) serves as cofactor. The cofactor is Mn(2+). Mainly expressed in testis and, at lower level in brain. According to PubMed:12121577, it is also expressed in pancreas and weakly expressed in thymus, prostate, ovary, lung, small intestine and heart.

The protein resides in the cytoplasm. It catalyses the reaction diphospho-myo-inositol polyphosphate + H2O = myo-inositol polyphosphate + phosphate.. It carries out the reaction P(1),P(6)-bis(5'-adenosyl) hexaphosphate + H2O = adenosine 5'-pentaphosphate + AMP + 2 H(+). The enzyme catalyses P(1),P(5)-bis(5'-adenosyl) pentaphosphate + H2O = adenosine 5'-tetraphosphate + AMP + 2 H(+). Cleaves a beta-phosphate from the diphosphate groups in PP-InsP5 (diphosphoinositol pentakisphosphate), suggesting that it may play a role in signal transduction. Also able to catalyze the hydrolysis of dinucleoside oligophosphates, with Ap6A and Ap5A being the preferred substrates. The major reaction products are ADP and p4a from Ap6A and ADP and ATP from Ap5A. Also able to hydrolyze 5-phosphoribose 1-diphosphate. This chain is Diphosphoinositol polyphosphate phosphohydrolase 3-beta, found in Homo sapiens (Human).